A 438-amino-acid polypeptide reads, in one-letter code: ATP-dependent RNA helicase sub2 (438 aa).

Low complexity predominate over residues 23–36 (TTAAPAANGAPAKT). The disordered stretch occupies residues 23-42 (TTAAPAANGAPAKTGDLTVT). A Q motif motif is present at residues 58 to 86 (TGFRDFLLKGELLRAITDCGFEHPSEVCI). Positions 86–261 (IPTAILNVDV…KKFMRNPLEV (176 aa)) constitute a Helicase ATP-binding domain. An ATP-binding site is contributed by 99–106 (AKSGLGKT). Positions 208-211 (DECD) match the DEAD box motif. Residues 289 to 434 (KLNDLLDNLE…EYPEGGVDSS (146 aa)) enclose the Helicase C-terminal domain.

It belongs to the DEAD box helicase family. DECD subfamily.

It is found in the nucleus. It carries out the reaction ATP + H2O = ADP + phosphate + H(+). In terms of biological role, ATP-binding RNA helicase involved in transcription elongation and required for the export of mRNA out of the nucleus. SUB2 also plays a role in pre-mRNA splicing and spliceosome assembly. May be involved in rDNA and telomeric silencing, and maintenance of genome integrity. In Aspergillus terreus (strain NIH 2624 / FGSC A1156), this protein is ATP-dependent RNA helicase sub2 (sub2).